Reading from the N-terminus, the 415-residue chain is Vascular endothelial growth factor C (415 aa).

Residues 1-31 form the signal peptide; sequence MHLLCFLSLACSLLAAALIPSPREAPATVAA. A propeptide spanning residues 32 to 107 is cleaved from the precursor; that stretch reads FESGLGFSEA…RTGDSVKFAA (76 aa). Cystine bridges form between Cys-127/Cys-169, Cys-158/Cys-205, and Cys-162/Cys-207. N-linked (GlcNAc...) asparagine glycans are attached at residues Asn-171, Asn-201, and Asn-236. Residues 224–415 constitute a propeptide that is removed on maturation; that stretch reads SLPATLPQCQ…PSYWKRPHLN (192 aa). A run of 4 repeats spans residues 276–291, 300–315, 324–339, and 343–358. Residues 276–358 are 4 X 16 AA repeats of C-X(10)-C-X-C-X(1,3)-C; the sequence is CGPNKELDED…LNPGKCACEC (83 aa).

The protein belongs to the PDGF/VEGF growth factor family. Homodimer; non-covalent and antiparallel. Interacts with FLT4/VEGFR3; the interaction is required for FLT4/VEGFR3 homodimarization and activation. In terms of processing, undergoes a complex proteolytic maturation which generates a variety of processed secreted forms with increased activity toward VEGFR-3, but only the fully processed form could activate VEGFR-2. VEGF-C first form an antiparallel homodimer linked by disulfide bonds. Before secretion, a cleavage occurs between Arg-223 and Ser-224 producing a heterotetramer. The next extracellular step of the processing removes the N-terminal propeptide. Finally the mature VEGF-C is composed mostly of two VEGF homology domains (VHDs) bound by non-covalent interactions. In terms of tissue distribution, expressed in adult heart, brain, spleen, lung, liver, skeletal muscle, kidney, testis and intestine with higher levels in heart, brain and kidney. Isoform 4 levels are very low. Isoform 3 is mostly expressed in liver and has reduced expression level in other tissues. Isoform 2 is mostly expressed in brain and kidney, although a lower level expression in other tissues is also detectable.

The protein localises to the secreted. Growth factor active in angiogenesis, and endothelial cell growth, stimulating their proliferation and migration and also has effects on the permeability of blood vessels. May function in angiogenesis of the venous and lymphatic vascular systems during embryogenesis, and also in the maintenance of differentiated lymphatic endothelium in adults. Binds and activates KDR/VEGFR2 and FLT4/VEGFR3 receptors. In Mus musculus (Mouse), this protein is Vascular endothelial growth factor C (Vegfc).